The following is a 211-amino-acid chain: Transcription factor bHLH150 (211 aa).

Polar residues predominate over residues 1-15; the sequence is MSSEQGNGSNPSTSP. The disordered stretch occupies residues 1–23; that stretch reads MSSEQGNGSNPSTSPEVEGTKTI. Residues 135 to 184 form the bHLH domain; the sequence is AIRGSGGSGRRRKLSAVGNRVRVLGGLVPGCRRTALPELLDETADYIAAL.

In terms of assembly, homodimer. Interacts with PRE3 and ASK7. Phosphorylated by ASK7.

The protein resides in the nucleus. Atypical bHLH transcription factor probably unable to bind DNA. Negatively regulates brassinosteroid signaling. The polypeptide is Transcription factor bHLH150 (BHLH150) (Arabidopsis thaliana (Mouse-ear cress)).